A 282-amino-acid polypeptide reads, in one-letter code: Leucine-rich protein (282 aa).

Its function is as follows. Not essential for viability or growth. Nevertheless, uncontrolled production in E.coli is detrimental to the normal physiology of the bacteria. This Streptococcus dysgalactiae subsp. equisimilis (Streptococcus equisimilis) protein is Leucine-rich protein (lrp).